A 257-amino-acid polypeptide reads, in one-letter code: Snake venom serine protease KN10 (257 aa).

Positions 1-18 are cleaved as a signal peptide; it reads MVLIRVLANLLILQLSYA. Positions 19–24 are excised as a propeptide; it reads QKSSEL. A Peptidase S1 domain is found at 25-248; sequence VVGGDECNIN…HLDWIKSIIA (224 aa). 5 disulfides stabilise this stretch: cysteine 31-cysteine 162, cysteine 49-cysteine 65, cysteine 141-cysteine 209, cysteine 173-cysteine 188, and cysteine 199-cysteine 224. Histidine 64 functions as the Charge relay system in the catalytic mechanism. A glycan (N-linked (GlcNAc...) asparagine) is linked at asparagine 102. The active-site Charge relay system is the aspartate 109. N-linked (GlcNAc...) asparagine glycans are attached at residues asparagine 120 and asparagine 121. Serine 203 serves as the catalytic Charge relay system.

It belongs to the peptidase S1 family. Snake venom subfamily. Monomer. In terms of tissue distribution, expressed by the venom gland.

It localises to the secreted. In terms of biological role, snake venom serine protease that may act in the hemostasis system of the prey. In Trimeresurus stejnegeri (Chinese green tree viper), this protein is Snake venom serine protease KN10.